Consider the following 184-residue polypeptide: ADP-ribosylation factor-like protein 8c (184 aa).

Residues 1–18 (MGLWDSLLNWLRSLFFKQ) constitute an intramembrane region (note=Mediates targeting to membranes). GTP is bound by residues 29 to 34 (NAGKTS), 48 to 51 (MIPT), 70 to 74 (DLGGQ), and 129 to 132 (NKID).

It belongs to the small GTPase superfamily. Arf family. In terms of assembly, interacts with tubulin.

Its subcellular location is the late endosome membrane. The protein localises to the lysosome membrane. It is found in the cytoplasm. The protein resides in the cytoskeleton. It localises to the spindle. May play a role in lysosome motility. May play a role in chromosome segregation. Its function is as follows. (Microbial infection) Component of tomato mosaic virus (ToMV) RNA replication complexes. Required for tobamovirus multiplication, especially for efficient negative-strand RNA synthesis and viral RNA capping. The protein is ADP-ribosylation factor-like protein 8c of Arabidopsis thaliana (Mouse-ear cress).